A 126-amino-acid polypeptide reads, in one-letter code: Fluoride-specific ion channel FluC (126 aa).

4 helical membrane passes run 4-24 (SILAVGIGGALGSLFRWFLGI), 35-55 (LGTFAANVIAGYVIGVAVAGF), 68-88 (FVITGLMGGLSTFSTFSAEVV), and 103-123 (IVIHVGASLVMTILGIATVSL). Positions 75 and 78 each coordinate Na(+).

This sequence belongs to the fluoride channel Fluc/FEX (TC 1.A.43) family.

The protein localises to the cell inner membrane. The enzyme catalyses fluoride(in) = fluoride(out). Its activity is regulated as follows. Na(+) is not transported, but it plays an essential structural role and its presence is essential for fluoride channel function. In terms of biological role, fluoride-specific ion channel. Important for reducing fluoride concentration in the cell, thus reducing its toxicity. The sequence is that of Fluoride-specific ion channel FluC from Paraburkholderia xenovorans (strain LB400).